The primary structure comprises 440 residues: Zinc finger MYND domain-containing protein 10 (440 aa).

The interaction with DNAAF11 stretch occupies residues 366–440 (QDLRLQARRW…VLAAQGDRAK (75 aa)). Residues Cys-394, Cys-397, Cys-405, Cys-408, Cys-414, Cys-418, His-426, and Cys-430 each contribute to the Zn(2+) site. Residues 394–430 (CAYCSAEASKRCSRCQNEWYCCRECQVKHWEKHGKTC) form an MYND-type zinc finger.

The protein belongs to the ZMYND10 family. Interacts (via C-terminus) with DNAAF11 (via CS domain); this interaction stabilizes DNAAF11 at the protein level. Interacts (via C-terminus) with DNAL1; this interaction stabilizes DNAL1 at the protein level. Interacts with DNAAF4, HSPA8, IQUB, RUVBL2 and DYNTL5.

The protein resides in the cytoplasm. It is found in the cytoskeleton. The protein localises to the microtubule organizing center. Its subcellular location is the centrosome. It localises to the centriolar satellite. The protein resides in the apical cell membrane. It is found in the dynein axonemal particle. Plays a role in axonemal structure organization and motility. Involved in axonemal pre-assembly of inner and outer dynein arms (IDA and ODA, respectively) for proper axoneme building for cilia motility. May act by indirectly regulating transcription of dynein proteins. This chain is Zinc finger MYND domain-containing protein 10, found in Homo sapiens (Human).